A 214-amino-acid polypeptide reads, in one-letter code: Cutinase CUT2 (214 aa).

Positions Met-1–Ala-18 are cleaved as a signal peptide. Residues Cys-40 and Cys-117 are joined by a disulfide bond. Ser-128 (nucleophile) is an active-site residue. An intrachain disulfide couples Cys-179 to Cys-186. Asp-183 is an active-site residue. The Proton donor/acceptor role is filled by His-196.

Belongs to the cutinase family. In terms of processing, the 2 disulfide bonds play a critical role in holding the catalytic residues in juxta-position; reduction of the disulfide bridges results in the complete inactivation of the enzyme.

The protein localises to the secreted. The enzyme catalyses cutin + H2O = cutin monomers.. Its function is as follows. Catalyzes the hydrolysis of complex carboxylic polyesters found in the cell wall of plants. Degrades cutin, a macromolecule that forms the structure of the plant cuticle. Required for efficient penetration of the host plant cuticle by the appressorium during the initial stage of fungal infection. The chain is Cutinase CUT2 from Pyricularia oryzae (strain 70-15 / ATCC MYA-4617 / FGSC 8958) (Rice blast fungus).